The primary structure comprises 304 residues: UDP-N-acetylenolpyruvoylglucosamine reductase (304 aa).

The FAD-binding PCMH-type domain occupies 33-198; that stretch reads RVGGPVDILL…ITATFCFESG (166 aa). The active site involves arginine 177. Residue serine 227 is the Proton donor of the active site. The active site involves glutamate 297.

This sequence belongs to the MurB family. The cofactor is FAD.

It is found in the cytoplasm. It catalyses the reaction UDP-N-acetyl-alpha-D-muramate + NADP(+) = UDP-N-acetyl-3-O-(1-carboxyvinyl)-alpha-D-glucosamine + NADPH + H(+). It participates in cell wall biogenesis; peptidoglycan biosynthesis. In terms of biological role, cell wall formation. This is UDP-N-acetylenolpyruvoylglucosamine reductase from Clostridium botulinum (strain Alaska E43 / Type E3).